The following is a 121-amino-acid chain: ATP synthase epsilon chain (121 aa).

Belongs to the ATPase epsilon chain family. In terms of assembly, F-type ATPases have 2 components, CF(1) - the catalytic core - and CF(0) - the membrane proton channel. CF(1) has five subunits: alpha(3), beta(3), gamma(1), delta(1), epsilon(1). CF(0) has three main subunits: a, b and c.

Its subcellular location is the cell membrane. In terms of biological role, produces ATP from ADP in the presence of a proton gradient across the membrane. The polypeptide is ATP synthase epsilon chain (Mycobacterium leprae (strain Br4923)).